Here is a 355-residue protein sequence, read N- to C-terminus: tRNA (guanine-N(1)-)-methyltransferase (355 aa).

S-adenosyl-L-methionine is bound by residues G109 and 129-134 (IGDYVL).

The protein belongs to the RNA methyltransferase TrmD family. Homodimer.

The protein resides in the cytoplasm. It catalyses the reaction guanosine(37) in tRNA + S-adenosyl-L-methionine = N(1)-methylguanosine(37) in tRNA + S-adenosyl-L-homocysteine + H(+). Functionally, specifically methylates guanosine-37 in various tRNAs. The sequence is that of tRNA (guanine-N(1)-)-methyltransferase from Chlamydia caviae (strain ATCC VR-813 / DSM 19441 / 03DC25 / GPIC) (Chlamydophila caviae).